Reading from the N-terminus, the 503-residue chain is Aminoaldehyde dehydrogenase 2, peroxisomal (503 aa).

2 residues coordinate Na(+): isoleucine 28 and aspartate 99. The NAD(+) site is built by tryptophan 161 and lysine 185. Leucine 189 contributes to the Na(+) binding site. Residue serine 239 coordinates NAD(+). Catalysis depends on glutamate 260, which acts as the Proton acceptor. Cysteine 294 (nucleophile) is an active-site residue. The short motif at 501 to 503 (AKL) is the Microbody targeting signal element.

It belongs to the aldehyde dehydrogenase family. In terms of assembly, forms homodimers.

The protein localises to the peroxisome. It catalyses the reaction 3-aminopropanal + NAD(+) + H2O = beta-alanine + NADH + 2 H(+). The catalysed reaction is 4-aminobutanal + NAD(+) + H2O = 4-aminobutanoate + NADH + 2 H(+). The enzyme catalyses 4-guanidinobutanal + NAD(+) + H2O = 4-guanidinobutanoate + NADH + 2 H(+). It functions in the pathway amine and polyamine biosynthesis; betaine biosynthesis via choline pathway; betaine from betaine aldehyde: step 1/1. Functionally, dehydrogenase that catalyzes the oxidation of several aminoaldehydes. Metabolizes and detoxifies aldehyde products of polyamine degradation to non-toxic amino acids. Catalyzes the oxidation of 3-aminopropanal to beta-alanine. Catalyzes the oxidation of 4-aminobutanal to 4-aminobutanoate. Catalyzes the oxidation of 4-guanidinobutanal to 4-guanidinobutanoate. In Pisum sativum (Garden pea), this protein is Aminoaldehyde dehydrogenase 2, peroxisomal.